Here is a 202-residue protein sequence, read N- to C-terminus: Snake venom metalloproteinase Ac1 (202 aa).

The 197-residue stretch at 6–202 (RYMEIVIVVD…ENPPCILNKP (197 aa)) folds into the Peptidase M12B domain. 2 residues coordinate Ca(2+): Glu-9 and Asp-93. Disulfide bonds link Cys-117–Cys-197 and Cys-157–Cys-181. Zn(2+) is bound at residue His-142. The active site involves Glu-143. His-146 and His-152 together coordinate Zn(2+). 2 residues coordinate Ca(2+): Cys-197 and Asn-200.

This sequence belongs to the venom metalloproteinase (M12B) family. P-I subfamily. Monomer. Zn(2+) is required as a cofactor. As to expression, expressed by the venom gland.

The protein resides in the secreted. Functionally, snake venom metalloproteinase that impairs hemostasis in the envenomed animal. The sequence is that of Snake venom metalloproteinase Ac1 from Deinagkistrodon acutus (Hundred-pace snake).